The following is a 37-amino-acid chain: Large ribosomal subunit protein bL36 (37 aa).

Belongs to the bacterial ribosomal protein bL36 family.

This is Large ribosomal subunit protein bL36 from Sulfurihydrogenibium sp. (strain YO3AOP1).